The sequence spans 416 residues: Glutamyl-tRNA reductase (416 aa).

Substrate contacts are provided by residues 49-52 (TCNR), serine 105, 110-112 (EPQ), and glutamine 116. Residue cysteine 50 is the Nucleophile of the active site. 185–190 (GAGETI) contacts NADP(+).

Belongs to the glutamyl-tRNA reductase family. In terms of assembly, homodimer.

The catalysed reaction is (S)-4-amino-5-oxopentanoate + tRNA(Glu) + NADP(+) = L-glutamyl-tRNA(Glu) + NADPH + H(+). The protein operates within porphyrin-containing compound metabolism; protoporphyrin-IX biosynthesis; 5-aminolevulinate from L-glutamyl-tRNA(Glu): step 1/2. Functionally, catalyzes the NADPH-dependent reduction of glutamyl-tRNA(Glu) to glutamate 1-semialdehyde (GSA). The chain is Glutamyl-tRNA reductase from Shewanella putrefaciens (strain CN-32 / ATCC BAA-453).